The chain runs to 377 residues: Glutamate 5-kinase (377 aa).

Lysine 18 contributes to the ATP binding site. Substrate contacts are provided by serine 59, aspartate 146, and asparagine 158. Residues 178–179 and 222–228 each bind ATP; these read SD and TGGMATK. The region spanning 286–363 is the PUA domain; the sequence is QGWVTVDAGA…DAIEAELGFT (78 aa).

The protein belongs to the glutamate 5-kinase family.

It localises to the cytoplasm. The catalysed reaction is L-glutamate + ATP = L-glutamyl 5-phosphate + ADP. It functions in the pathway amino-acid biosynthesis; L-proline biosynthesis; L-glutamate 5-semialdehyde from L-glutamate: step 1/2. Its function is as follows. Catalyzes the transfer of a phosphate group to glutamate to form L-glutamate 5-phosphate. The sequence is that of Glutamate 5-kinase from Caulobacter vibrioides (strain ATCC 19089 / CIP 103742 / CB 15) (Caulobacter crescentus).